The primary structure comprises 338 residues: Serpentine receptor class alpha-32 (338 aa).

The next 7 membrane-spanning stretches (helical) occupy residues 30 to 50 (VYVIYIDLVLILALFLSIHAI), 63 to 83 (ITHLLIASLVYGNVHNASYTI), 120 to 140 (RFLFIAIELALNVDRIIVILF), 152 to 172 (GEILNILAVILSFALGCLLHL), 199 to 219 (LTSYTILSACCAALDFLMMWY), 249 to 269 (LNSLLQLFVTSIYAISMFVLA), and 289 to 309 (TTPYSTLLVPIQIKVFIQWIG).

Belongs to the nematode receptor-like protein sra family.

The protein localises to the membrane. This is Serpentine receptor class alpha-32 (sra-32) from Caenorhabditis elegans.